A 433-amino-acid polypeptide reads, in one-letter code: Mblk-1-related factor 1 (433 aa).

In terms of domain architecture, HTH psq-type 1 spans 145–197; it reads NKSNILRRNYTVEDLTQAVEDIRQGKLGTRRASVVYGIPRSTLRNKIYKLEAE. The segment at residues 173–193 is a DNA-binding region (H-T-H motif); the sequence is TRRASVVYGIPRSTLRNKIYK. The segment covering 235–254 has biased composition (low complexity); that stretch reads GNQSDSSSSSPHASMCPSSP. Disordered regions lie at residues 235–278 and 304–338; these read GNQS…SCSP and ANIS…PKRG. Positions 304–319 are enriched in polar residues; that stretch reads ANISNVDTHTPTPISE. Basic and acidic residues predominate over residues 320 to 332; that stretch reads KSQKMHGNEEWKR. In terms of domain architecture, HTH psq-type 2 spans 334–386; it reads RPKRGQYRKYDKNALDEAVRSVRRGEMTVHRAGSFFGVPHSTLEYKVKERNLM. The segment at residues 362–382 is a DNA-binding region (H-T-H motif); it reads VHRAGSFFGVPHSTLEYKVKE. A disordered region spans residues 393 to 433; it reads LYSHDSSTSEDGSQLVTSTISEKSDSSSHTSTPIPFPISLV. The span at 396 to 408 shows a compositional bias: polar residues; it reads HDSSTSEDGSQLV. Over residues 409–424 the composition is skewed to low complexity; it reads TSTISEKSDSSSHTST.

Expressed in AIM, RIC, AIZ, ADF, ADL, ASK, AWA, AUA, AIN, RIH (or RIR) and RIF head neurons and, in PVP, PVQ and DVA (or DVC) tail neurons, some intestinal cells, somatic gonad and vulva.

The protein localises to the nucleus. Functionally, may act as transcription activator. Plays a role in neurogenesis by regulating neurite pruning between left and right AIM neurons and left and right RIF neurons during larval development. Regulates olfactory plasticity. The polypeptide is Mblk-1-related factor 1 (Caenorhabditis elegans).